A 343-amino-acid chain; its full sequence is Dihydroorotase (343 aa).

His14 and His16 together coordinate Zn(2+). Substrate is bound by residues His16 to Arg18 and Asn42. Zn(2+) contacts are provided by Lys100, His137, and His175. Residue Lys100 is modified to N6-carboxylysine. His137 provides a ligand contact to substrate. Position 220 (Leu220) interacts with substrate. Asp248 is a Zn(2+) binding site. The active site involves Asp248. Substrate is bound by residues His252 and Ala264.

The protein belongs to the metallo-dependent hydrolases superfamily. DHOase family. Class II DHOase subfamily. As to quaternary structure, homodimer. The cofactor is Zn(2+).

The catalysed reaction is (S)-dihydroorotate + H2O = N-carbamoyl-L-aspartate + H(+). It functions in the pathway pyrimidine metabolism; UMP biosynthesis via de novo pathway; (S)-dihydroorotate from bicarbonate: step 3/3. Catalyzes the reversible cyclization of carbamoyl aspartate to dihydroorotate. The chain is Dihydroorotase from Synechococcus sp. (strain CC9902).